A 185-amino-acid chain; its full sequence is Ribosome-recycling factor (185 aa).

A disordered region spans residues 138 to 159 (KVKKLEKDKEISEDESKKAQEQ).

This sequence belongs to the RRF family.

It is found in the cytoplasm. Responsible for the release of ribosomes from messenger RNA at the termination of protein biosynthesis. May increase the efficiency of translation by recycling ribosomes from one round of translation to another. This chain is Ribosome-recycling factor, found in Helicobacter acinonychis (strain Sheeba).